A 206-amino-acid polypeptide reads, in one-letter code: Dephospho-CoA kinase (206 aa).

Residues 4 to 200 (IVALTGGIGS…AHYLQLASQF (197 aa)) enclose the DPCK domain. 12-17 (GSGKST) contacts ATP.

This sequence belongs to the CoaE family.

It localises to the cytoplasm. The enzyme catalyses 3'-dephospho-CoA + ATP = ADP + CoA + H(+). The protein operates within cofactor biosynthesis; coenzyme A biosynthesis; CoA from (R)-pantothenate: step 5/5. In terms of biological role, catalyzes the phosphorylation of the 3'-hydroxyl group of dephosphocoenzyme A to form coenzyme A. This chain is Dephospho-CoA kinase, found in Shigella flexneri.